We begin with the raw amino-acid sequence, 120 residues long: Galanin-like peptide (120 aa).

A signal peptide spans 1–22; it reads MALTVPLIVLAVLLSLMESPAS. The propeptide occupies 85–120; sequence SLGETFAKPDSGVTFVGVPDVVPWKRIRPGTTRFQI.

This sequence belongs to the galanin family.

Its subcellular location is the secreted. Its function is as follows. Hypothalamic neuropeptide which binds to the G-protein-coupled galanin receptors (GALR1, GALR2 and GALR3). Involved in a large number of putative physiological functions in CNS homeostatic processes, including the regulation of gonadotropin-releasing hormone secretion. The sequence is that of Galanin-like peptide (GALP) from Sus scrofa (Pig).